The following is a 135-amino-acid chain: VapC ribonuclease aq_1901 (135 aa).

Residues 3-130 (LLDTTVLLDF…FKKLGFKTVN (128 aa)) form the PINc domain. Position 5 (Asp5) interacts with Mg(2+).

It belongs to the PINc/VapC protein family. The cofactor is Mg(2+).

Functionally, toxic component of a type II toxin-antitoxin (TA) system. An RNase. The polypeptide is VapC ribonuclease aq_1901 (Aquifex aeolicus (strain VF5)).